Here is a 668-residue protein sequence, read N- to C-terminus: tRNA 5-methylaminomethyl-2-thiouridine biosynthesis bifunctional protein MnmC (668 aa).

The interval 1–245 is tRNA (mnm(5)s(2)U34)-methyltransferase; that stretch reads MKHYSIQPAN…KREMLCGVME (245 aa). The segment at 270–668 is FAD-dependent cmnm(5)s(2)U34 oxidoreductase; the sequence is IGGGIACALL…LLKGKAVKAG (399 aa).

In the N-terminal section; belongs to the methyltransferase superfamily. tRNA (mnm(5)s(2)U34)-methyltransferase family. It in the C-terminal section; belongs to the DAO family. FAD serves as cofactor.

It localises to the cytoplasm. The catalysed reaction is 5-aminomethyl-2-thiouridine(34) in tRNA + S-adenosyl-L-methionine = 5-methylaminomethyl-2-thiouridine(34) in tRNA + S-adenosyl-L-homocysteine + H(+). In terms of biological role, catalyzes the last two steps in the biosynthesis of 5-methylaminomethyl-2-thiouridine (mnm(5)s(2)U) at the wobble position (U34) in tRNA. Catalyzes the FAD-dependent demodification of cmnm(5)s(2)U34 to nm(5)s(2)U34, followed by the transfer of a methyl group from S-adenosyl-L-methionine to nm(5)s(2)U34, to form mnm(5)s(2)U34. The chain is tRNA 5-methylaminomethyl-2-thiouridine biosynthesis bifunctional protein MnmC from Shigella boydii serotype 4 (strain Sb227).